The sequence spans 198 residues: uncharacterized protein (198 aa).

One can recognise a PA14 domain in the interval Met-1–Gly-110.

It belongs to the flocculin family.

This is an uncharacterized protein from Saccharomyces cerevisiae (strain ATCC 204508 / S288c) (Baker's yeast).